The sequence spans 390 residues: Leu/Ile/Val-binding protein homolog 6 (390 aa).

The first 21 residues, 1–21 (MKKIALTALAVFSLAASAAYA), serve as a signal peptide directing secretion.

This sequence belongs to the leucine-binding protein family.

In terms of biological role, component of an amino-acid transport system. This chain is Leu/Ile/Val-binding protein homolog 6, found in Brucella suis biovar 1 (strain 1330).